The primary structure comprises 287 residues: HTH-type transcriptional regulator MurR (287 aa).

In terms of domain architecture, HTH rpiR-type spans 1 to 77 (MLYLAKMRNA…MALIEEHSVS (77 aa)). The segment at residues 37 to 56 (SRNMAKQLEISQSSIVKFAQ) is a DNA-binding region (H-T-H motif). Residues 128-268 (VINLISKAPL…FVGMVQLNDV (141 aa)) form the SIS domain.

As to quaternary structure, homotetramer.

Its pathway is amino-sugar metabolism; N-acetylmuramate degradation [regulation]. Represses the expression of the murPQ operon involved in the uptake and degradation of N-acetylmuramic acid (MurNAc). Binds to two adjacent inverted repeats within the operator region. MurNAc 6-phosphate, the substrate of MurQ, is the specific inducer that weakens binding of MurR to the operator. The polypeptide is HTH-type transcriptional regulator MurR (Salmonella arizonae (strain ATCC BAA-731 / CDC346-86 / RSK2980)).